Consider the following 1906-residue polypeptide: Replicase polyprotein (1906 aa).

Residues 513-692 (MRYLTEVFKS…DEFTKMCWSK (180 aa)) enclose the SF3 helicase domain. 544 to 551 (GESGRGKS) is an ATP binding site. Residues 1124-1350 (KDQVAQKLIT…KDLIRAFSKI (227 aa)) are protease. The region spanning 1126 to 1343 (QVAQKLITNR…YAESISQKDL (218 aa)) is the Peptidase C3 domain. Catalysis depends on for picornain 3C-like protease activity residues His1171, Glu1213, and Cys1305. Residues 1638-1772 (PKVIAGDFST…NFSDEVSEWF (135 aa)) enclose the RdRp catalytic domain.

Specific enzymatic cleavages in vivo by the viral protease yield a variety of precursors and mature proteins.

The catalysed reaction is RNA(n) + a ribonucleoside 5'-triphosphate = RNA(n+1) + diphosphate. Replicase polyprotein contains helicase, VPg, protease and RNA-directed RNA polymerase functions. Functionally, RNA-directed RNA polymerase replicates genomic and antigenomic RNA and transcribes the vial genome. Its function is as follows. The protease generates mature viral proteins from the precursor polyprotein. In terms of biological role, VPg is covalently linked to the 5'-end of genomic RNA. In Apis mellifera (Honeybee), this protein is Replicase polyprotein.